We begin with the raw amino-acid sequence, 549 residues long: Urocanate hydratase (549 aa).

Residues 46-47 (GG), Q124, 170-172 (GMG), E190, R195, 236-237 (NA), 257-261 (QTSAH), 267-268 (YV), and Y316 contribute to the NAD(+) site. C404 is a catalytic residue. Residue G486 participates in NAD(+) binding.

Belongs to the urocanase family. Requires NAD(+) as cofactor.

The protein resides in the cytoplasm. The catalysed reaction is 4-imidazolone-5-propanoate = trans-urocanate + H2O. It functions in the pathway amino-acid degradation; L-histidine degradation into L-glutamate; N-formimidoyl-L-glutamate from L-histidine: step 2/3. Functionally, catalyzes the conversion of urocanate to 4-imidazolone-5-propionate. The sequence is that of Urocanate hydratase from Caldanaerobacter subterraneus subsp. tengcongensis (strain DSM 15242 / JCM 11007 / NBRC 100824 / MB4) (Thermoanaerobacter tengcongensis).